The primary structure comprises 422 residues: Protein IQ-DOMAIN 5 (422 aa).

Residues 23 to 30 (SKKDENVK) carry the Nuclear localization signal motif. 3 consecutive IQ domains span residues 87-115 (ENRA…GLVR), 116-138 (LQAL…CMQA), and 139-164 (LVRV…TSQQ). The calmodulin-binding stretch occupies residues 137-151 (QALVRVQARVRARRV). Positions 269 to 422 (GENGMEQSEN…NSDPIKQRLA (154 aa)) are disordered. Positions 273 to 308 (MEQSENVPKTQIKSVSKMPNTSNLVSGVSSQMTGPC) are enriched in polar residues. A compositionally biased stretch (low complexity) spans 310-327 (SDGDSSSPGISSSIPVVS). Residues 355-371 (NPKERSREPNRSSKERL) show a composition bias toward basic and acidic residues. Residues 373 to 387 (LPNSGKSLGSQSTKA) show a composition bias toward polar residues. Positions 412–422 (RNSDPIKQRLA) are enriched in basic and acidic residues.

Belongs to the IQD family. As to quaternary structure, binds to multiple calmodulin (CaM) in the presence of Ca(2+) and CaM-like proteins. Expressed mostly in vegetative tissues including older parts of the root, cotyledons, leaves and shoot apical meristems (SAM). Present at low levels in pollen, siliques and seeds.

The protein localises to the nucleus. It is found in the cytoplasm. Its subcellular location is the cytoskeleton. It localises to the spindle. The protein resides in the phragmoplast. Its function is as follows. May be involved in cooperative interactions with calmodulins or calmodulin-like proteins. Recruits calmodulin (CaM) calcium sensor proteins to cortical microtubule arrays, thus being a potential scaffold in cellular signaling and trafficking. Binds to microtubules (MTs) and promotes MT assembly and dynamics to modulate pavement cell (PC) morphogenesis via cellulose deposition-dependent anisotropic cell expansion triggered by cellulose synthase complexes (CSCs). May associate with nucleic acids and regulate gene expression at the transcriptional or post-transcriptional level. In Arabidopsis thaliana (Mouse-ear cress), this protein is Protein IQ-DOMAIN 5.